The chain runs to 1179 residues: Pesticidal crystal protein Cry1Ad (1179 aa).

The protein belongs to the delta endotoxin family.

Functionally, promotes colloidosmotic lysis by binding to the midgut epithelial cells of many lepidopteran larvae. This chain is Pesticidal crystal protein Cry1Ad (cry1Ad), found in Bacillus thuringiensis subsp. aizawai.